We begin with the raw amino-acid sequence, 362 residues long: Ribosomal RNA large subunit methyltransferase M (362 aa).

Residues Ser194, 227-230 (CPGG), Asp246, Asp266, and Asp284 contribute to the S-adenosyl-L-methionine site. Lys313 (proton acceptor) is an active-site residue.

It belongs to the class I-like SAM-binding methyltransferase superfamily. RNA methyltransferase RlmE family. RlmM subfamily. As to quaternary structure, monomer.

Its subcellular location is the cytoplasm. The enzyme catalyses cytidine(2498) in 23S rRNA + S-adenosyl-L-methionine = 2'-O-methylcytidine(2498) in 23S rRNA + S-adenosyl-L-homocysteine + H(+). Catalyzes the 2'-O-methylation at nucleotide C2498 in 23S rRNA. This Aggregatibacter aphrophilus (strain NJ8700) (Haemophilus aphrophilus) protein is Ribosomal RNA large subunit methyltransferase M.